The following is a 181-amino-acid chain: MDELTSQALTAFTTRYCDAWHEKHNSWPLSEELYGVPSPCIISSTSDAVYWQPQPFEGEANVNAVESAFDIVIQSAVHAFYTTQFAGDMYAQFADEKLTLLQTWSADDFRRVQENLIGHLVTQKRLKLPPTLFIATLENELEVISVCNLSGEVCKETLGTRNRTVLAASLAEFLTQLKPLL.

The protein belongs to the Syd family.

It localises to the cell inner membrane. In terms of biological role, interacts with the SecY protein in vivo. May bind preferentially to an uncomplexed state of SecY, thus functioning either as a chelating agent for excess SecY in the cell or as a regulatory factor that negatively controls the translocase function. The polypeptide is Protein Syd (Citrobacter koseri (strain ATCC BAA-895 / CDC 4225-83 / SGSC4696)).